The chain runs to 249 residues: tRNA (guanine-N(1)-)-methyltransferase (249 aa).

S-adenosyl-L-methionine-binding positions include Gly-113 and Val-132 to Val-137.

Belongs to the RNA methyltransferase TrmD family. In terms of assembly, homodimer.

It is found in the cytoplasm. The catalysed reaction is guanosine(37) in tRNA + S-adenosyl-L-methionine = N(1)-methylguanosine(37) in tRNA + S-adenosyl-L-homocysteine + H(+). Functionally, specifically methylates guanosine-37 in various tRNAs. The polypeptide is tRNA (guanine-N(1)-)-methyltransferase (Desulforudis audaxviator (strain MP104C)).